A 776-amino-acid chain; its full sequence is Genome polyprotein (776 aa).

The interval 1 to 27 (MAGKAVLKGKGGGPPRRASKVAPKKTR) is disordered. Topologically, residues 1–98 (MAGKAVLKGK…LHRRGSRRTT (98 aa)) are cytoplasmic. Residues 17-27 (RASKVAPKKTR) are compositionally biased toward basic residues. The tract at residues 33–68 (MPNGLVLMRMLGVLWHALTGTARSPVLKAFWKVVPL) is hydrophobic; homodimerization of capsid protein C. Residues 97–117 (TTIDWMTPLLITVMLGMCLTA) constitute a propeptide, ER anchor for the protein C, removed in mature form by serine protease NS3. A helical transmembrane segment spans residues 99–117 (IDWMTPLLITVMLGMCLTA). At 118–242 (TVRRERDGSM…HLTRVEGWVW (125 aa)) the chain is on the extracellular side. A glycan (N-linked (GlcNAc...) asparagine; by host) is linked at Asn-144. The chain crosses the membrane as a helical span at residues 243 to 260 (KNKLFTLSLVMVAWLMVD). A topological domain (cytoplasmic) is located at residue Gly-261. A helical transmembrane segment spans residues 262–280 (LLPRILIVVVALALVPAYA). Residues 281–727 (SRCTHLENRD…HTVLGGAFNT (447 aa)) lie on the Extracellular side of the membrane. 4 cysteine pairs are disulfide-bonded: Cys-283–Cys-310, Cys-340–Cys-396, Cys-354–Cys-385, and Cys-372–Cys-401. N-linked (GlcNAc...) asparagine; by host glycosylation occurs at Asn-434. 2 disulfides stabilise this stretch: Cys-466–Cys-570 and Cys-587–Cys-618. Positions 728-748 (LLGGVGFLPKILLGVAMAWLG) form an intramembrane region, helical. Topologically, residues 749–755 (LNMRNPT) are extracellular. An intramembrane region (helical) is located at residues 756–776 (LSMGFLLSGGLVLAMTLGVGA).

Specific enzymatic cleavages in vivo yield mature proteins Peptide 2K acts as a signal sequence and is removed from the N-terminus of NS4B by the host signal peptidase in the ER lumen. Signal cleavage at the 2K-4B site requires a prior NS3 protease-mediated cleavage at the 4A-2K site.

It is found in the virion. It localises to the secreted. The protein localises to the virion membrane. The protein resides in the host endoplasmic reticulum membrane. Functionally, capsid protein C self-assembles to form an icosahedral capsid about 30 nm in diameter. The capsid encapsulates the genomic RNA. In terms of biological role, prM acts as a chaperone for envelope protein E during intracellular virion assembly by masking and inactivating envelope protein E fusion peptide. prM is matured in the last step of virion assembly, presumably to avoid catastrophic activation of the viral fusion peptide induced by the acidic pH of the trans-Golgi network. After cleavage by host furin, the pr peptide is released in the extracellular medium and small envelope protein M and envelope protein E homodimers are dissociated. Envelope protein E binding to host cell surface receptor is followed by virus internalization through clathrin-mediated endocytosis. Envelope protein E is subsequently involved in membrane fusion between virion and host late endosomes. Synthesized as a homodimer with prM which acts as a chaperone for envelope protein E. After cleavage of prM, envelope protein E dissociate from small envelope protein M and homodimerizes. The polypeptide is Genome polyprotein (Homo sapiens (Human)).